A 282-amino-acid chain; its full sequence is Bis(5'-nucleosyl)-tetraphosphatase, symmetrical (282 aa).

It belongs to the Ap4A hydrolase family.

It catalyses the reaction P(1),P(4)-bis(5'-adenosyl) tetraphosphate + H2O = 2 ADP + 2 H(+). In terms of biological role, hydrolyzes diadenosine 5',5'''-P1,P4-tetraphosphate to yield ADP. The sequence is that of Bis(5'-nucleosyl)-tetraphosphatase, symmetrical from Escherichia coli O81 (strain ED1a).